Here is a 261-residue protein sequence, read N- to C-terminus: Triosephosphate isomerase (261 aa).

10–12 is a substrate binding site; it reads NWK. The Electrophile role is filled by H100. E172 acts as the Proton acceptor in catalysis. Substrate contacts are provided by residues G178, S218, and 239-240; that span reads GG.

The protein belongs to the triosephosphate isomerase family. Homodimer.

The protein resides in the cytoplasm. It carries out the reaction D-glyceraldehyde 3-phosphate = dihydroxyacetone phosphate. It participates in carbohydrate biosynthesis; gluconeogenesis. It functions in the pathway carbohydrate degradation; glycolysis; D-glyceraldehyde 3-phosphate from glycerone phosphate: step 1/1. Functionally, involved in the gluconeogenesis. Catalyzes stereospecifically the conversion of dihydroxyacetone phosphate (DHAP) to D-glyceraldehyde-3-phosphate (G3P). The protein is Triosephosphate isomerase of Rhodococcus jostii (strain RHA1).